Here is a 900-residue protein sequence, read N- to C-terminus: UPF0182 protein Ppro_3567 (900 aa).

The next 7 membrane-spanning stretches (helical) occupy residues 15–35, 60–80, 112–132, 174–194, 210–230, 257–277, and 282–302; these read FFPL…LLNL, GAGL…LHVA, VSML…AMKW, FIIL…GGIL, LAVL…LDSF, VLTF…WKGV, and LLAP…YPGV.

Belongs to the UPF0182 family.

It localises to the cell membrane. The sequence is that of UPF0182 protein Ppro_3567 from Pelobacter propionicus (strain DSM 2379 / NBRC 103807 / OttBd1).